A 577-amino-acid polypeptide reads, in one-letter code: 2-hydroxyacyl-CoA lyase (577 aa).

Residue E59 coordinates thiamine diphosphate. A thiamine pyrophosphate binding region spans residues 412–493; the sequence is TMDVGRAVLV…VIVFNNNGVY (82 aa). Residues D462 and N489 each coordinate Mg(2+).

It belongs to the TPP enzyme family. Homotetramer. Mg(2+) serves as cofactor. Thiamine diphosphate is required as a cofactor.

It carries out the reaction an (R)-2-hydroxy-long-chain-fatty acyl-CoA = a long-chain fatty aldehyde + formyl-CoA. The enzyme catalyses a 2-hydroxy-3-methyl fatty acyl-CoA = a 2-methyl-branched fatty aldehyde + formyl-CoA. Catalyzes a carbon-carbon cleavage reaction; cleaves a 2-hydroxy-3-methylacyl-CoA into formyl-CoA and a 2-methyl-branched fatty aldehyde. The protein is 2-hydroxyacyl-CoA lyase of Oryza sativa subsp. japonica (Rice).